Reading from the N-terminus, the 208-residue chain is Microtubule-associated protein Jupiter (208 aa).

2 disordered regions span residues 24–43 (RPPG…QTPR) and 82–106 (RGQK…PGKN). Phosphoserine is present on Ser30. Thr41 carries the phosphothreonine modification. A compositionally biased stretch (basic and acidic residues) spans 82–93 (RGQKTVDSHSRL). Thr98 and Thr102 each carry phosphothreonine. Residues Ser111, Ser139, and Ser150 each carry the phosphoserine modification. A disordered region spans residues 132–208 (HYNGKSGSVS…PPGGYSSGLW (77 aa)). Positions 137 to 150 (SGSVSSASSSVSSS) are enriched in low complexity. Composition is skewed to polar residues over residues 151-165 (TENL…SEGN) and 178-189 (EYSQRQESSNGG).

The protein belongs to the MAP Jupiter family. Ubiquitous expression throughout development. Expressed during cell division in the syncytial embryo. Expressed in developing photoreceptors of the eye imaginal disk of the third larval stage. In adults, highly expressed in neurons of the brain, concentrated in axons. In the adult ovaries, expression accumulates in the germarium and the polar follicular cells as well as in the oocyte along the microtubule network.

The protein localises to the nucleus. Its subcellular location is the cytoplasm. It localises to the cytoskeleton. The protein resides in the spindle. In terms of biological role, binds to all microtubule populations. This Drosophila melanogaster (Fruit fly) protein is Microtubule-associated protein Jupiter.